Consider the following 320-residue polypeptide: ATP-dependent 6-phosphofructokinase (320 aa).

Gly12 contacts ATP. ADP-binding positions include 22–26 (RGVVR) and 55–60 (RYSVSD). ATP is bound by residues 73 to 74 (RF) and 103 to 106 (GDGS). Asp104 contributes to the Mg(2+) binding site. 126–128 (TID) is a substrate binding site. Asp128 acts as the Proton acceptor in catalysis. Arg155 lines the ADP pocket. Residues Arg163 and 170 to 172 (MGR) contribute to the substrate site. Residues 186–188 (GCE), Lys212, and 214–216 (KKH) each bind ADP. Substrate-binding positions include Glu223, Arg244, and 250-253 (HIQR).

It belongs to the phosphofructokinase type A (PFKA) family. ATP-dependent PFK group I subfamily. Prokaryotic clade 'B1' sub-subfamily. Homotetramer. Mg(2+) serves as cofactor.

Its subcellular location is the cytoplasm. The enzyme catalyses beta-D-fructose 6-phosphate + ATP = beta-D-fructose 1,6-bisphosphate + ADP + H(+). It participates in carbohydrate degradation; glycolysis; D-glyceraldehyde 3-phosphate and glycerone phosphate from D-glucose: step 3/4. Allosterically activated by ADP and other diphosphonucleosides, and allosterically inhibited by phosphoenolpyruvate. Its function is as follows. Catalyzes the phosphorylation of D-fructose 6-phosphate to fructose 1,6-bisphosphate by ATP, the first committing step of glycolysis. The protein is ATP-dependent 6-phosphofructokinase of Citrobacter koseri (strain ATCC BAA-895 / CDC 4225-83 / SGSC4696).